We begin with the raw amino-acid sequence, 145 residues long: Cytochrome c-type biogenesis protein CcmE (145 aa).

The Cytoplasmic portion of the chain corresponds to M1–R7. The helical; Signal-anchor for type II membrane protein transmembrane segment at L8–A28 threads the bilayer. Residues L29 to G145 lie on the Periplasmic side of the membrane. H123 and Y127 together coordinate heme.

Belongs to the CcmE/CycJ family.

It is found in the cell inner membrane. Functionally, heme chaperone required for the biogenesis of c-type cytochromes. Transiently binds heme delivered by CcmC and transfers the heme to apo-cytochromes in a process facilitated by CcmF and CcmH. The protein is Cytochrome c-type biogenesis protein CcmE of Sphingopyxis alaskensis (strain DSM 13593 / LMG 18877 / RB2256) (Sphingomonas alaskensis).